The following is a 610-amino-acid chain: ESX-5 secretion system protein EccA5 (610 aa).

An ATP-binding site is contributed by 357-364 (GPPGTGKT).

It belongs to the CbxX/CfxQ family. As to quaternary structure, part of the ESX-5 / type VII secretion system (T7SS), which is composed of cytosolic and membrane components.

Its subcellular location is the cytoplasm. In terms of biological role, part of the ESX-5 specialized secretion system, which is responsible for the secretion of EsxN and a number of PE_PGRS and PPE proteins. EccA5 exhibits ATPase activity and may provide energy for the export of ESX-5 substrates. The polypeptide is ESX-5 secretion system protein EccA5 (Mycobacterium marinum (strain ATCC BAA-535 / M)).